A 681-amino-acid polypeptide reads, in one-letter code: Minichromosome maintenance domain-containing protein 2 (681 aa).

Phosphoserine is present on serine 292. The MCM domain maps to 533 to 621 (KQFTTEDFEK…LIAALLLEIS (89 aa)).

In terms of tissue distribution, predominantly expressed in the gonads and the brain. Not detected in the heart, lung, nor embryonic fibroblasts.

Functionally, plays an important role in meiotic recombination and associated DNA double-strand break repair. The sequence is that of Minichromosome maintenance domain-containing protein 2 (Mcmdc2) from Mus musculus (Mouse).